Consider the following 407-residue polypeptide: Methylthioribose kinase (407 aa).

Residues Asn40, Lys57, and 111 to 113 (EDL) contribute to the ATP site. Position 229 (Asp229) interacts with substrate. 246 to 248 (DAE) is a binding site for ATP. Residue Arg344 participates in substrate binding.

Belongs to the methylthioribose kinase family. In terms of assembly, homodimer.

It catalyses the reaction 5-(methylsulfanyl)-D-ribose + ATP = 5-(methylsulfanyl)-alpha-D-ribose 1-phosphate + ADP + H(+). It participates in amino-acid biosynthesis; L-methionine biosynthesis via salvage pathway; S-methyl-5-thio-alpha-D-ribose 1-phosphate from S-methyl-5'-thioadenosine (hydrolase route): step 2/2. Functionally, catalyzes the phosphorylation of methylthioribose into methylthioribose-1-phosphate. This Yersinia pestis bv. Antiqua (strain Angola) protein is Methylthioribose kinase.